The following is a 397-amino-acid chain: Ribosomal RNA large subunit methyltransferase I (397 aa).

The region spanning 2–79 (TAAIYLVKGR…KEEINKAFFV (78 aa)) is the PUA domain.

The protein belongs to the methyltransferase superfamily. RlmI family.

The protein resides in the cytoplasm. The enzyme catalyses cytidine(1962) in 23S rRNA + S-adenosyl-L-methionine = 5-methylcytidine(1962) in 23S rRNA + S-adenosyl-L-homocysteine + H(+). In terms of biological role, specifically methylates the cytosine at position 1962 (m5C1962) of 23S rRNA. This chain is Ribosomal RNA large subunit methyltransferase I, found in Vibrio parahaemolyticus serotype O3:K6 (strain RIMD 2210633).